The chain runs to 288 residues: Cytochrome b-c1 complex catalytic subunit, mitochondrial (288 aa).

Residues 12 to 34 traverse the membrane as a helical segment; sequence SMVQKFIAGGVGVTGLTASYLLY. One can recognise a Cytochrome c domain in the interval 69-222; that stretch reads ASIRRGFQVY…DLVEYEDGTP (154 aa). 3 residues coordinate heme c: cysteine 82, cysteine 85, and histidine 86. Residues 111-121 show a composition bias toward acidic residues; that stretch reads EELEYDDEPDD. A disordered region spans residues 111 to 138; that stretch reads EELEYDDEPDDEGKPRKRPGKLADYIPG. A helical transmembrane segment spans residues 250 to 268; that stretch reads WGLKALVVLSSLYLLSIWV.

This sequence belongs to the cytochrome c family. In terms of assembly, component of the ubiquinol-cytochrome c oxidoreductase (cytochrome b-c1 complex, complex III, CIII), a multisubunit enzyme composed of 10 subunits. The complex is composed of 3 respiratory subunits cytochrome b (COB), cytochrome c1 (CYT1) and Rieske protein (RIP1), 2 core protein subunits COR1 and QCR2, and 5 low-molecular weight protein subunits QCR6, QCR7, QCR8, QCR9 and QCR10. The complex exists as an obligatory dimer and forms supercomplexes (SCs) in the inner mitochondrial membrane with a monomer or a dimer of cytochrome c oxidase (complex IV, CIV), resulting in 2 different assemblies (supercomplexes III(2)IV and III(2)IV(2)). Requires heme c as cofactor.

Its subcellular location is the mitochondrion inner membrane. It catalyses the reaction a quinol + 2 Fe(III)-[cytochrome c](out) = a quinone + 2 Fe(II)-[cytochrome c](out) + 2 H(+)(out). Functionally, component of the ubiquinol-cytochrome c oxidoreductase, a multisubunit transmembrane complex that is part of the mitochondrial electron transport chain which drives oxidative phosphorylation. The complex plays an important role in the uptake of multiple carbon sources present in different host niches. This is Cytochrome b-c1 complex catalytic subunit, mitochondrial from Candida albicans (strain SC5314 / ATCC MYA-2876) (Yeast).